A 380-amino-acid chain; its full sequence is Cytochrome b (380 aa).

4 helical membrane passes run 34–54 (FGSL…LLAM), 78–99 (WLIR…YLHI), 114–134 (WNTG…GYVL), and 179–199 (FFAL…IHLT). Residues His-84 and His-98 each contribute to the heme b site. His-183 and His-197 together coordinate heme b. An a ubiquinone-binding site is contributed by His-202. 4 consecutive transmembrane segments (helical) span residues 227 to 247 (TKDL…AMFS), 289 to 309 (LGGV…PFLH), 321 to 341 (LSQL…WVGS), and 348 to 368 (FIII…ILFP).

It belongs to the cytochrome b family. The cytochrome bc1 complex contains 11 subunits: 3 respiratory subunits (MT-CYB, CYC1 and UQCRFS1), 2 core proteins (UQCRC1 and UQCRC2) and 6 low-molecular weight proteins (UQCRH/QCR6, UQCRB/QCR7, UQCRQ/QCR8, UQCR10/QCR9, UQCR11/QCR10 and a cleavage product of UQCRFS1). This cytochrome bc1 complex then forms a dimer. The cofactor is heme b.

Its subcellular location is the mitochondrion inner membrane. Component of the ubiquinol-cytochrome c reductase complex (complex III or cytochrome b-c1 complex) that is part of the mitochondrial respiratory chain. The b-c1 complex mediates electron transfer from ubiquinol to cytochrome c. Contributes to the generation of a proton gradient across the mitochondrial membrane that is then used for ATP synthesis. This Amazilia tzacatl (Rufous-tailed hummingbird) protein is Cytochrome b (MT-CYB).